The primary structure comprises 497 residues: ATP-dependent RNA helicase CshA (497 aa).

Residues 1–29 carry the Q motif motif; sequence MKFSELGLSDSLLKAIKRSGYEEATPIQE. The region spanning 32-202 is the Helicase ATP-binding domain; the sequence is IPMVLEGKDV…VQFMSDPETV (171 aa). Position 45–52 (45–52) interacts with ATP; the sequence is AQTGTGKT. The DEAD box signature appears at 150–153; it reads DEAD. The 146-residue stretch at 228-373 folds into the Helicase C-terminal domain; sequence DIMTRLIDVQ…PLKPPTAEEA (146 aa). Residues 425–497 form a disordered region; the sequence is AASEVPVKIT…SFNIRHRKEN (73 aa). Over residues 448–458 the composition is skewed to low complexity; sequence RNGNRNNSHGG. Basic residues-rich tracts occupy residues 459–473 and 481–497; these read NHYR…QHGS and KSHS…RKEN.

Belongs to the DEAD box helicase family. CshA subfamily. As to quaternary structure, oligomerizes, may be a member of the RNA degradosome.

It localises to the cytoplasm. The protein localises to the cell membrane. It catalyses the reaction ATP + H2O = ADP + phosphate + H(+). Functionally, DEAD-box RNA helicase possibly involved in RNA degradation. Unwinds dsRNA in both 5'- and 3'-directions, has RNA-dependent ATPase activity. Over-expression leads to cell aggregation. The protein is ATP-dependent RNA helicase CshA of Limosilactobacillus reuteri (Lactobacillus reuteri).